The following is an 866-amino-acid chain: DNA mismatch repair protein MutS (866 aa).

618–625 (GPNMSGKS) contributes to the ATP binding site.

Belongs to the DNA mismatch repair MutS family.

Functionally, this protein is involved in the repair of mismatches in DNA. It is possible that it carries out the mismatch recognition step. This protein has a weak ATPase activity. This Flavobacterium psychrophilum (strain ATCC 49511 / DSM 21280 / CIP 103535 / JIP02/86) protein is DNA mismatch repair protein MutS.